Here is an 864-residue protein sequence, read N- to C-terminus: Bifunctional uridylyltransferase/uridylyl-removing enzyme (864 aa).

The tract at residues 1–328 (MLFPYFPLSE…QTNEPVQVRL (328 aa)) is uridylyltransferase. Residues 329-686 (LDKEFQCVNN…ISNRFSEGGT (358 aa)) form a uridylyl-removing region. Residues 446–562 (VDEHIVRTLL…LHFAEAVQNN (117 aa)) form the HD domain. ACT domains follow at residues 687-766 (EIFV…TFRA) and 793-864 (EMEL…LEPK).

Belongs to the GlnD family. Mg(2+) is required as a cofactor.

The enzyme catalyses [protein-PII]-L-tyrosine + UTP = [protein-PII]-uridylyl-L-tyrosine + diphosphate. It catalyses the reaction [protein-PII]-uridylyl-L-tyrosine + H2O = [protein-PII]-L-tyrosine + UMP + H(+). Uridylyltransferase (UTase) activity is inhibited by glutamine, while glutamine activates uridylyl-removing (UR) activity. Modifies, by uridylylation and deuridylylation, the PII regulatory proteins (GlnB and homologs), in response to the nitrogen status of the cell that GlnD senses through the glutamine level. Under low glutamine levels, catalyzes the conversion of the PII proteins and UTP to PII-UMP and PPi, while under higher glutamine levels, GlnD hydrolyzes PII-UMP to PII and UMP (deuridylylation). Thus, controls uridylylation state and activity of the PII proteins, and plays an important role in the regulation of nitrogen assimilation and metabolism. The polypeptide is Bifunctional uridylyltransferase/uridylyl-removing enzyme (Pasteurella multocida (strain Pm70)).